The primary structure comprises 216 residues: MOB kinase activator 3C (216 aa).

Cys-82, Cys-87, His-164, and His-169 together coordinate Zn(2+).

This sequence belongs to the MOB1/phocein family.

Its function is as follows. May regulate the activity of kinases. The protein is MOB kinase activator 3C (MOB3C) of Homo sapiens (Human).